Consider the following 655-residue polypeptide: DNA mismatch repair protein MutL (655 aa).

2 disordered regions span residues glutamate 357–threonine 416 and aspartate 439–proline 460. The span at serine 371–tyrosine 383 shows a compositional bias: basic and acidic residues. Polar residues predominate over residues asparagine 402–threonine 416.

This sequence belongs to the DNA mismatch repair MutL/HexB family.

This protein is involved in the repair of mismatches in DNA. It is required for dam-dependent methyl-directed DNA mismatch repair. May act as a 'molecular matchmaker', a protein that promotes the formation of a stable complex between two or more DNA-binding proteins in an ATP-dependent manner without itself being part of a final effector complex. This is DNA mismatch repair protein MutL from Staphylococcus saprophyticus subsp. saprophyticus (strain ATCC 15305 / DSM 20229 / NCIMB 8711 / NCTC 7292 / S-41).